We begin with the raw amino-acid sequence, 648 residues long: Acetyl-coenzyme A synthetase (648 aa).

CoA contacts are provided by residues 190 to 193 (RGGK), Thr-308, and Asn-332. Residues 384 to 386 (GEP), 408 to 413 (DTWWQT), Asp-497, and Arg-512 each bind ATP. Position 520 (Ser-520) interacts with CoA. Arg-523 is an ATP binding site. Positions 534, 536, and 539 each coordinate Mg(2+). Residue Arg-581 coordinates CoA. Lys-606 bears the N6-acetyllysine mark.

Belongs to the ATP-dependent AMP-binding enzyme family. Requires Mg(2+) as cofactor. Post-translationally, acetylated. Deacetylation by the SIR2-homolog deacetylase activates the enzyme.

The catalysed reaction is acetate + ATP + CoA = acetyl-CoA + AMP + diphosphate. Catalyzes the conversion of acetate into acetyl-CoA (AcCoA), an essential intermediate at the junction of anabolic and catabolic pathways. AcsA undergoes a two-step reaction. In the first half reaction, AcsA combines acetate with ATP to form acetyl-adenylate (AcAMP) intermediate. In the second half reaction, it can then transfer the acetyl group from AcAMP to the sulfhydryl group of CoA, forming the product AcCoA. The protein is Acetyl-coenzyme A synthetase of Bradyrhizobium diazoefficiens (strain JCM 10833 / BCRC 13528 / IAM 13628 / NBRC 14792 / USDA 110).